The sequence spans 347 residues: 3-isopropylmalate dehydrogenase (347 aa).

Substrate-binding residues include R94, R104, R128, and D219. D219, D243, and D247 together coordinate Mg(2+). Residue 279–291 (GSAPDIAGQGKAD) coordinates NAD(+).

It belongs to the isocitrate and isopropylmalate dehydrogenases family. LeuB type 2 subfamily. As to quaternary structure, homodimer. It depends on Mg(2+) as a cofactor. Requires Mn(2+) as cofactor.

The protein resides in the cytoplasm. It catalyses the reaction (2R,3S)-3-isopropylmalate + NAD(+) = 4-methyl-2-oxopentanoate + CO2 + NADH. It functions in the pathway amino-acid biosynthesis; L-leucine biosynthesis; L-leucine from 3-methyl-2-oxobutanoate: step 3/4. Catalyzes the oxidation of 3-carboxy-2-hydroxy-4-methylpentanoate (3-isopropylmalate) to 3-carboxy-4-methyl-2-oxopentanoate. The product decarboxylates to 4-methyl-2 oxopentanoate. In Streptomyces avermitilis (strain ATCC 31267 / DSM 46492 / JCM 5070 / NBRC 14893 / NCIMB 12804 / NRRL 8165 / MA-4680), this protein is 3-isopropylmalate dehydrogenase.